Consider the following 364-residue polypeptide: Phospho-N-acetylmuramoyl-pentapeptide-transferase (364 aa).

10 helical membrane-spanning segments follow: residues 3–23 (AILF…RVAI), 51–71 (TMGG…AKLI), 80–100 (ALLL…DDFI), 116–136 (MIGL…SWLE), 154–174 (IGWI…IIAA), 185–205 (LDGL…FVNI), 229–249 (PLDL…FLWW), 256–276 (IFMG…LAIL), 281–301 (LLLI…MLQV), and 341–361 (FWII…AEWV).

The protein belongs to the glycosyltransferase 4 family. MraY subfamily. Mg(2+) is required as a cofactor.

The protein localises to the cell membrane. The catalysed reaction is UDP-N-acetyl-alpha-D-muramoyl-L-alanyl-gamma-D-glutamyl-meso-2,6-diaminopimeloyl-D-alanyl-D-alanine + di-trans,octa-cis-undecaprenyl phosphate = di-trans,octa-cis-undecaprenyl diphospho-N-acetyl-alpha-D-muramoyl-L-alanyl-D-glutamyl-meso-2,6-diaminopimeloyl-D-alanyl-D-alanine + UMP. The protein operates within cell wall biogenesis; peptidoglycan biosynthesis. Functionally, catalyzes the initial step of the lipid cycle reactions in the biosynthesis of the cell wall peptidoglycan: transfers peptidoglycan precursor phospho-MurNAc-pentapeptide from UDP-MurNAc-pentapeptide onto the lipid carrier undecaprenyl phosphate, yielding undecaprenyl-pyrophosphoryl-MurNAc-pentapeptide, known as lipid I. The polypeptide is Phospho-N-acetylmuramoyl-pentapeptide-transferase (Nocardioides sp. (strain ATCC BAA-499 / JS614)).